The chain runs to 195 residues: Interferon tau (195 aa).

An N-terminal signal peptide occupies residues 1–23; that stretch reads MAFVLSLRMALVLVSYCPGGSLG. 2 disulfides stabilise this stretch: Cys24–Cys122 and Cys52–Cys162. Residue Asn101 is glycosylated (N-linked (GlcNAc...) asparagine).

Belongs to the alpha/beta interferon family. IFN-alphaII subfamily. In terms of tissue distribution, constitutively and exclusively expressed in the mononuclear cells of the extraembryonic trophectoderm.

Its subcellular location is the secreted. Its function is as follows. Paracrine hormone primarily responsible for maternal recognition of pregnancy. Interacts with endometrial receptors, probably type I interferon receptors, and blocks estrogen receptor expression, preventing the estrogen-induced increase in oxytocin receptor expression in the endometrium. This results in the suppression of the pulsatile endometrial release of the luteolytic hormone prostaglandin F2-alpha, hindering the regression of the corpus luteum (luteolysis) and therefore a return to ovarian cyclicity. This, and a possible direct effect of IFN-tau on prostaglandin synthesis, leads in turn to continued ovarian progesterone secretion, which stimulates the secretion by the endometrium of the nutrients required for the growth of the conceptus. In summary, displays particularly high antiviral and antiproliferative potency concurrently with particular weak cytotoxicity, high antiluteolytic activity and immunomodulatory properties. In contrast with other IFNs, IFN-tau is not virally inducible. This chain is Interferon tau (IFNT), found in Ovibos moschatus (Muskox).